Here is a 625-residue protein sequence, read N- to C-terminus: Coagulation factor XI (625 aa).

Positions 1 to 18 are cleaved as a signal peptide; the sequence is MIFLYQVVHFILFTSVSG. Apple domains lie at 20–103, 110–193, 200–283, and 291–374; these read CVTQ…FKQC, CNKD…LKSC, CIRD…LQSC, and CHSS…LRLC. 17 cysteine pairs are disulfide-bonded: Cys20/Cys103, Cys46/Cys76, Cys50/Cys56, Cys110/Cys193, Cys136/Cys165, Cys140/Cys146, Cys200/Cys283, Cys226/Cys255, Cys230/Cys236, Cys291/Cys374, Cys317/Cys346, Cys321/Cys327, Cys380/Cys500, Cys416/Cys432, Cys514/Cys581, Cys545/Cys560, and Cys571/Cys599. N-linked (GlcNAc...) (complex) asparagine glycosylation is found at Asn90 and Asn126. Asn163 is a glycosylation site (N-linked (GlcNAc...) (complex) asparagine; atypical). Positions 388 to 623 constitute a Peptidase S1 domain; it reads IVGGTASVRG…YVDWILEKTQ (236 aa). The active-site Charge relay system is the His431. Asn450 carries N-linked (GlcNAc...) (complex) asparagine glycosylation. Asp480 acts as the Charge relay system in catalysis. The N-linked (GlcNAc...) (complex) asparagine glycan is linked to Asn491. 547–550 is a binding site for heparin; sequence KRYR. Ser575 functions as the Charge relay system in the catalytic mechanism.

Belongs to the peptidase S1 family. Plasma kallikrein subfamily. In terms of assembly, homodimer; disulfide-linked. Can form non-covalently bonded homodimers. After activation the heavy and light chains are also linked by a disulfide bond. Interacts (activated) with F9 (inactive and activated) in calcium-dependent manner. Forms a heterodimer with SERPINA5. Interacts with Anopheles gambiae D7L2. Interacts (activated) with guianensin, an anticoagulant protein from Simulium guianense saliva. N-glycosylated on both chains. N-glycosylated sites mainly consist of nonfucosylated sialylated biantennary (in high abundance) and/or triantennary (in low abundance) complex structures. Glycosylation at Asn-163 uses a rare non-canonical Asn-X-Cys glycosite. In terms of processing, activated by factor XIIa (or XII), which cleaves each polypeptide after Arg-387 into the light chain, which contains the active site, and the heavy chain, which associates with high molecular weight (HMW) kininogen. Activated by F12 (activated); the presence of negatively charged surfaces accelerates activation. Activated by F2 (thrombin); the presence of negatively charged surfaces, such as polyphosphate and dextran sulfate, strongly accelerates activation. Autoactivated; the presence of negatively charged surfaces, such as polyphosphate and dextran sulfate, accelerates autoactivation and autolysis. In terms of tissue distribution, isoform 2 is produced by platelets and megakaryocytes but absent from other blood cells.

It localises to the secreted. The catalysed reaction is Selective cleavage of Arg-|-Ala and Arg-|-Val bonds in factor IX to form factor IXa.. Inhibited by SERPINA5. Functionally, factor XI triggers the middle phase of the intrinsic pathway of blood coagulation by activating factor IX. The polypeptide is Coagulation factor XI (F11) (Homo sapiens (Human)).